The chain runs to 157 residues: Large ribosomal subunit protein bL17 (157 aa).

Positions 124 to 157 (AAPVVSKQDRAKRVKGSKKAESRSQENEGGDAAE) are disordered.

It belongs to the bacterial ribosomal protein bL17 family. Part of the 50S ribosomal subunit. Contacts protein L32.

This Chlorobaculum tepidum (strain ATCC 49652 / DSM 12025 / NBRC 103806 / TLS) (Chlorobium tepidum) protein is Large ribosomal subunit protein bL17.